Reading from the N-terminus, the 195-residue chain is 3-isopropylmalate dehydratase small subunit (195 aa).

It belongs to the LeuD family. LeuD type 1 subfamily. Heterodimer of LeuC and LeuD.

It carries out the reaction (2R,3S)-3-isopropylmalate = (2S)-2-isopropylmalate. The protein operates within amino-acid biosynthesis; L-leucine biosynthesis; L-leucine from 3-methyl-2-oxobutanoate: step 2/4. Catalyzes the isomerization between 2-isopropylmalate and 3-isopropylmalate, via the formation of 2-isopropylmaleate. This is 3-isopropylmalate dehydratase small subunit from Frankia casuarinae (strain DSM 45818 / CECT 9043 / HFP020203 / CcI3).